The sequence spans 210 residues: NAD(P)H-quinone oxidoreductase subunit I (210 aa).

4Fe-4S ferredoxin-type domains lie at 54-83 (GRIH…VDWA) and 94-123 (YSYS…VTED). The [4Fe-4S] cluster site is built by C63, C66, C69, C73, C103, C106, C109, and C113.

It belongs to the complex I 23 kDa subunit family. As to quaternary structure, NDH-1 is composed of at least 11 different subunits. [4Fe-4S] cluster serves as cofactor.

It is found in the cellular thylakoid membrane. It carries out the reaction a plastoquinone + NADH + (n+1) H(+)(in) = a plastoquinol + NAD(+) + n H(+)(out). It catalyses the reaction a plastoquinone + NADPH + (n+1) H(+)(in) = a plastoquinol + NADP(+) + n H(+)(out). Functionally, NDH-1 shuttles electrons from an unknown electron donor, via FMN and iron-sulfur (Fe-S) centers, to quinones in the respiratory and/or the photosynthetic chain. The immediate electron acceptor for the enzyme in this species is believed to be plastoquinone. Couples the redox reaction to proton translocation, and thus conserves the redox energy in a proton gradient. This is NAD(P)H-quinone oxidoreductase subunit I from Synechococcus sp. (strain JA-2-3B'a(2-13)) (Cyanobacteria bacterium Yellowstone B-Prime).